Consider the following 93-residue polypeptide: U12-lycotoxin-Ls1b (93 aa).

The signal sequence occupies residues 1–18; the sequence is MKFAVILLFSLVVLAVAS. Positions 19–38 are excised as a propeptide; it reads ESVEEVRREIDIEDLPEQQR.

This sequence belongs to the neurotoxin 31 family. Post-translationally, contains 5 disulfide bonds. As to expression, expressed by the venom gland.

Its subcellular location is the secreted. The protein is U12-lycotoxin-Ls1b of Lycosa singoriensis (Wolf spider).